A 340-amino-acid polypeptide reads, in one-letter code: Phosphoribosylformylglycinamidine cyclo-ligase (340 aa).

Belongs to the AIR synthase family.

It localises to the cytoplasm. The catalysed reaction is 2-formamido-N(1)-(5-O-phospho-beta-D-ribosyl)acetamidine + ATP = 5-amino-1-(5-phospho-beta-D-ribosyl)imidazole + ADP + phosphate + H(+). Its pathway is purine metabolism; IMP biosynthesis via de novo pathway; 5-amino-1-(5-phospho-D-ribosyl)imidazole from N(2)-formyl-N(1)-(5-phospho-D-ribosyl)glycinamide: step 2/2. In Streptococcus pyogenes serotype M1, this protein is Phosphoribosylformylglycinamidine cyclo-ligase.